Consider the following 512-residue polypeptide: Sucrose-6-phosphate hydrolase (512 aa).

Substrate contacts are provided by residues 40-43, Q59, W67, 102-103, 165-166, E229, and W311; these read WMND, FS, and RD. Residue D43 is part of the active site.

It belongs to the glycosyl hydrolase 32 family.

It localises to the cytoplasm. The enzyme catalyses Hydrolysis of terminal non-reducing beta-D-fructofuranoside residues in beta-D-fructofuranosides.. It functions in the pathway glycan biosynthesis; sucrose metabolism. This Zymomonas mobilis subsp. mobilis (strain ATCC 10988 / DSM 424 / LMG 404 / NCIMB 8938 / NRRL B-806 / ZM1) protein is Sucrose-6-phosphate hydrolase (sacA).